Reading from the N-terminus, the 703-residue chain is Fatty acid oxidation complex subunit alpha (703 aa).

Positions 1–190 (MSEQKAFSLN…KLGVVDACVP (190 aa)) are enoyl-CoA hydratase. Positions 308 to 703 (AAVKKVGVLG…TRAGEGRTFY (396 aa)) are 3-hydroxyacyl-CoA dehydrogenase.

In the N-terminal section; belongs to the enoyl-CoA hydratase/isomerase family. This sequence in the central section; belongs to the 3-hydroxyacyl-CoA dehydrogenase family. Heterotetramer of two alpha chains (FadJ) and two beta chains (FadI).

Its subcellular location is the cytoplasm. It carries out the reaction a (3S)-3-hydroxyacyl-CoA = a (2E)-enoyl-CoA + H2O. The enzyme catalyses a 4-saturated-(3S)-3-hydroxyacyl-CoA = a (3E)-enoyl-CoA + H2O. It catalyses the reaction a (3S)-3-hydroxyacyl-CoA + NAD(+) = a 3-oxoacyl-CoA + NADH + H(+). The catalysed reaction is (3S)-3-hydroxybutanoyl-CoA = (3R)-3-hydroxybutanoyl-CoA. It functions in the pathway lipid metabolism; fatty acid beta-oxidation. In terms of biological role, catalyzes the formation of a hydroxyacyl-CoA by addition of water on enoyl-CoA. Also exhibits 3-hydroxyacyl-CoA epimerase and 3-hydroxyacyl-CoA dehydrogenase activities. This chain is Fatty acid oxidation complex subunit alpha, found in Vibrio parahaemolyticus serotype O3:K6 (strain RIMD 2210633).